Here is a 309-residue protein sequence, read N- to C-terminus: tRNA pseudouridine synthase B (309 aa).

Residue aspartate 51 is the Nucleophile of the active site.

The protein belongs to the pseudouridine synthase TruB family. Type 1 subfamily.

The catalysed reaction is uridine(55) in tRNA = pseudouridine(55) in tRNA. Functionally, responsible for synthesis of pseudouridine from uracil-55 in the psi GC loop of transfer RNAs. The sequence is that of tRNA pseudouridine synthase B from Coxiella burnetii (strain Dugway 5J108-111).